The chain runs to 344 residues: UDP-3-O-acylglucosamine N-acyltransferase (344 aa).

His-250 serves as the catalytic Proton acceptor.

This sequence belongs to the transferase hexapeptide repeat family. LpxD subfamily. Homotrimer.

The catalysed reaction is a UDP-3-O-[(3R)-3-hydroxyacyl]-alpha-D-glucosamine + a (3R)-hydroxyacyl-[ACP] = a UDP-2-N,3-O-bis[(3R)-3-hydroxyacyl]-alpha-D-glucosamine + holo-[ACP] + H(+). The protein operates within bacterial outer membrane biogenesis; LPS lipid A biosynthesis. Its function is as follows. Catalyzes the N-acylation of UDP-3-O-acylglucosamine using 3-hydroxyacyl-ACP as the acyl donor. Is involved in the biosynthesis of lipid A, a phosphorylated glycolipid that anchors the lipopolysaccharide to the outer membrane of the cell. This Maricaulis maris (strain MCS10) (Caulobacter maris) protein is UDP-3-O-acylglucosamine N-acyltransferase.